A 248-amino-acid polypeptide reads, in one-letter code: MAYERQYYPGATSVAANRRKHMSGKLEKLREISDEDLTAVLGHRAPGSDYPSTHPPLAEMGEPACSTRENVAATPGAAAGDRVRYIQFADSMYNAPATPYFRSYFAAINFRGVDPGTLSGRQIVEARERDMEQCAKVQMETEITDHALAGVRGATVHGHSVRLQEDGVMFDMLDRRRLENGTIIMDKDQVAIPLDRKVDLGKPMSSEEAAKRTTIYRVDNVAFRDDAEVVEWVHRIFDQRTKFGFQPK.

A coenzyme M-binding site is contributed by Arg-121.

The protein belongs to the methyl-coenzyme M reductase gamma subunit family. MCR is a hexamer of two alpha, two beta, and two gamma chains, forming a dimer of heterotrimers. Coenzyme F430 serves as cofactor.

It localises to the cytoplasm. It carries out the reaction coenzyme B + methyl-coenzyme M = methane + coenzyme M-coenzyme B heterodisulfide. The protein operates within one-carbon metabolism; methyl-coenzyme M reduction; methane from methyl-coenzyme M: step 1/1. In terms of biological role, component of the methyl-coenzyme M reductase (MCR) I that catalyzes the reductive cleavage of methyl-coenzyme M (CoM-S-CH3 or 2-(methylthio)ethanesulfonate) using coenzyme B (CoB or 7-mercaptoheptanoylthreonine phosphate) as reductant which results in the production of methane and the mixed heterodisulfide of CoB and CoM (CoM-S-S-CoB). This is the final step in methanogenesis. This is Methyl-coenzyme M reductase subunit gamma (mcrG) from Methanosarcina barkeri (strain Fusaro / DSM 804).